Reading from the N-terminus, the 115-residue chain is Divalent-cation tolerance protein CutA (115 aa).

Positions 19, 86, and 87 each coordinate Cu cation.

Belongs to the CutA family. Homotrimer. Requires Cu cation as cofactor.

It is found in the cytoplasm. Involved in resistance toward heavy metals. The polypeptide is Divalent-cation tolerance protein CutA (Citrobacter koseri (strain ATCC BAA-895 / CDC 4225-83 / SGSC4696)).